The chain runs to 207 residues: Vascular endothelial growth factor B (207 aa).

The signal sequence occupies residues 1–21 (MSPLLRRLLLVALLQLARTQA). 3 disulfide bridges follow: cysteine 47/cysteine 89, cysteine 78/cysteine 122, and cysteine 82/cysteine 124. Positions 129-139 (KESAVKPDRVA) are enriched in basic and acidic residues. The interval 129–178 (KESAVKPDRVAIPHHRPQPRSVPGWDSTPGASSPADIIHPTPAPGSSARL) is disordered.

The protein belongs to the PDGF/VEGF growth factor family. Homodimer; disulfide-linked. Can also form heterodimer with VEGF. Post-translationally, VEGF-B186 is O-glycosylated. In terms of tissue distribution, abundantly expressed in heart, brain, kidney and skeletal muscle.

The protein localises to the secreted. Its function is as follows. Growth factor for endothelial cells. VEGF-B167 binds heparin and neuropilin-1 whereas the binding to neuropilin-1 of VEGF-B186 is regulated by proteolysis. VEGF-B seems to be required for normal heart function in adult but is not required for proper development of the cardiovascular system either during development or for angiogenesis in adults. This Mus musculus (Mouse) protein is Vascular endothelial growth factor B (Vegfb).